A 390-amino-acid polypeptide reads, in one-letter code: Zinc transporter 7 (390 aa).

The Cytoplasmic portion of the chain corresponds to 1–37 (MLPLSIKDDEYKPPKFNLVRKVSGWIRSIFSDTTSRN). Residues 38–58 (LFCFLCLNLSFAFVELFYGIW) traverse the membrane as a helical segment. Residues 59-67 (SNSLGLISD) lie on the Lumenal side of the membrane. Residues 68–88 (SFHMFFDCTALLAGLAASVIS) traverse the membrane as a helical segment. Residues 89–102 (RWKTNEAFSYGYVR) lie on the Cytoplasmic side of the membrane. The helical transmembrane segment at 103–123 (AEVLAGFVNGLFLIFTAFFIF) threads the bilayer. Residues 124 to 140 (SEGIERALDTPEVHHER) lie on the Lumenal side of the membrane. Residues 141–161 (LLPVSILGFLVNLIGIFVFQH) traverse the membrane as a helical segment. Residues 161–226 (HGGGHGHSHE…SHDQSHKHGH (66 aa)) are his-rich loop. Residues 162-250 (GGGHGHSHES…TGSSKQILEG (89 aa)) lie on the Cytoplasmic side of the membrane. The tract at residues 167 to 243 (HSHESGHGHS…DEPPEEHTGS (77 aa)) is disordered. Positions 177–186 (HSLFNGSLSH) are enriched in low complexity. Over residues 187-208 (GHSHSHGGSHGHSHGGGHGHSH) the composition is skewed to basic residues. 2 stretches are compositionally biased toward basic and acidic residues: residues 209–222 (SHGEGHGHSHDQSH) and 232–242 (CHDEPPEEHTG). The helical transmembrane segment at 251–271 (VFLHIVADALGSVGVIISTIL) threads the bilayer. The Lumenal portion of the chain corresponds to 272–276 (MQRYG). A helical membrane pass occupies residues 277–297 (LMIADPICSMLIALLIFVSVI). The Cytoplasmic segment spans residues 298 to 390 (PLLKQSIGIL…LYVQIDMAAM (93 aa)).

Belongs to the cation diffusion facilitator (CDF) transporter (TC 2.A.4) family. SLC30A subfamily. Homooligomer.

The protein localises to the golgi apparatus membrane. Its subcellular location is the cytoplasmic vesicle. It localises to the golgi apparatus. It is found in the trans-Golgi network. The protein resides in the sarcoplasmic reticulum. The protein localises to the mitochondrion. It catalyses the reaction Zn(2+)(in) = Zn(2+)(out). In terms of biological role, zinc ion transporter mediating zinc entry from the cytosol into the lumen of organelles along the secretory pathway. By contributing to zinc ion homeostasis within the early secretory pathway, regulates the activation and folding of enzymes like alkaline phosphatases. This chain is Zinc transporter 7 (slc30a7), found in Xenopus tropicalis (Western clawed frog).